Consider the following 405-residue polypeptide: Palmitoyltransferase PFA3 (405 aa).

The Cytoplasmic segment spans residues 1-27 (MLISHPRIMIRHAPWVTSIETFCCSLA). Residues 28 to 48 (TLFPKVFYTSVLTWSVYALIV) traverse the membrane as a helical segment. The Lumenal portion of the chain corresponds to 49–62 (HGCYDTLMTTQETS). A helical transmembrane segment spans residues 63-83 (IFAIAIGLIGLTLYILCLYTY). At 84-214 (FKVLRAGPGS…GFYNHKFFAQ (131 aa)) the chain is on the cytoplasmic side. Positions 167–217 (RYCTKCSVWKPDRCHHCSTCNRCVLRMDHHCPWFAMCVGFYNHKFFAQFLM) constitute a DHHC domain. The chain crosses the membrane as a helical span at residues 215–235 (FLMYLTAYSGFDFVVSLSILW). Residues 236-251 (KFFADEKYNDHYLSLN) lie on the Lumenal side of the membrane. The helical transmembrane segment at 252–272 (LVFLFVLSLAFFITVGGFSAF) threads the bilayer. Topologically, residues 273-405 (SLYLVFRNKT…ANQTTDTNPF (133 aa)) are cytoplasmic.

The protein belongs to the DHHC palmitoyltransferase family. PFA3 subfamily. Autopalmitoylated.

It localises to the vacuole membrane. The catalysed reaction is L-cysteinyl-[protein] + hexadecanoyl-CoA = S-hexadecanoyl-L-cysteinyl-[protein] + CoA. Palmitoyltransferase specific for VAC8. Palmitoylates VAC8 at one or more of its N-terminal cysteine residues, which is required for its proper membrane localization. The protein is Palmitoyltransferase PFA3 (PFA3) of Debaryomyces hansenii (strain ATCC 36239 / CBS 767 / BCRC 21394 / JCM 1990 / NBRC 0083 / IGC 2968) (Yeast).